The sequence spans 179 residues: tRNA (cytidine(56)-2'-O)-methyltransferase (179 aa).

Residues Leu-82, 112–116, and 130–137 contribute to the S-adenosyl-L-methionine site; these read GAEKV and VGNQPHSE.

This sequence belongs to the aTrm56 family. As to quaternary structure, homodimer.

It localises to the cytoplasm. It carries out the reaction cytidine(56) in tRNA + S-adenosyl-L-methionine = 2'-O-methylcytidine(56) in tRNA + S-adenosyl-L-homocysteine + H(+). Its function is as follows. Specifically catalyzes the AdoMet-dependent 2'-O-ribose methylation of cytidine at position 56 in tRNAs. In Methanococcus maripaludis (strain C5 / ATCC BAA-1333), this protein is tRNA (cytidine(56)-2'-O)-methyltransferase.